The primary structure comprises 78 residues: Large ribosomal subunit protein bL28 (78 aa).

Belongs to the bacterial ribosomal protein bL28 family.

The chain is Large ribosomal subunit protein bL28 from Tropheryma whipplei (strain TW08/27) (Whipple's bacillus).